The primary structure comprises 170 residues: Acetyl-CoA decarbonylase/synthase complex subunit epsilon 1 (170 aa).

The protein belongs to the CdhB family. Heterotetramer of two alpha and two epsilon subunits. The ACDS complex is made up of alpha, epsilon, beta, gamma and delta subunits with a probable stoichiometry of (alpha(2)epsilon(2))(4)-beta(8)-(gamma(1)delta(1))(8).

The protein operates within one-carbon metabolism; methanogenesis from acetate. Functionally, part of a complex that catalyzes the reversible cleavage of acetyl-CoA, allowing growth on acetate as sole source of carbon and energy. The alpha-epsilon subcomponent functions as a carbon monoxide dehydrogenase. The precise role of the epsilon subunit is unclear; it may have a stabilizing role within the alpha(2)epsilon(2) component and/or be involved in electron transfer to FAD during a potential FAD-mediated CO oxidation. This Methanosarcina mazei (strain ATCC BAA-159 / DSM 3647 / Goe1 / Go1 / JCM 11833 / OCM 88) (Methanosarcina frisia) protein is Acetyl-CoA decarbonylase/synthase complex subunit epsilon 1 (cdhB1).